We begin with the raw amino-acid sequence, 296 residues long: N-acetylmuramic acid 6-phosphate etherase 2 (296 aa).

One can recognise an SIS domain in the interval 55 to 218; it reads IIKSFNQGGR…STISMIGIGK (164 aa). Glutamate 83 serves as the catalytic Proton donor. The active site involves glutamate 114.

This sequence belongs to the GCKR-like family. MurNAc-6-P etherase subfamily. As to quaternary structure, homodimer.

It carries out the reaction N-acetyl-D-muramate 6-phosphate + H2O = N-acetyl-D-glucosamine 6-phosphate + (R)-lactate. It functions in the pathway amino-sugar metabolism; N-acetylmuramate degradation. Specifically catalyzes the cleavage of the D-lactyl ether substituent of MurNAc 6-phosphate, producing GlcNAc 6-phosphate and D-lactate. In Enterococcus faecalis (strain ATCC 700802 / V583), this protein is N-acetylmuramic acid 6-phosphate etherase 2.